A 248-amino-acid polypeptide reads, in one-letter code: Probable transcriptional regulatory protein PSPA7_4544 (248 aa).

This sequence belongs to the TACO1 family.

It is found in the cytoplasm. This chain is Probable transcriptional regulatory protein PSPA7_4544, found in Pseudomonas paraeruginosa (strain DSM 24068 / PA7) (Pseudomonas aeruginosa (strain PA7)).